The chain runs to 1028 residues: Receptor-type guanylate cyclase gcy-13 (1028 aa).

N-linked (GlcNAc...) asparagine glycosylation is found at Asn58, Asn156, Asn324, Asn337, Asn377, and Asn394. A helical membrane pass occupies residues 438 to 458 (IVVIVAVIIVLCCAAAAIAAF). Residues 459-1028 (LVIKARRDEE…WLLGMKEESA (570 aa)) are Cytoplasmic-facing. The segment at 491–511 (ESHHSSRSLQSNSTTTTGTTG) is disordered. The segment covering 497–511 (RSLQSNSTTTTGTTG) has biased composition (low complexity). The 272-residue stretch at 499-770 (LQSNSTTTTG…DMVNKLMKNM (272 aa)) folds into the Protein kinase domain. Residues 786–817 (SVLEKHASSLEDEVQERMKELVEEKKKSDILL) adopt a coiled-coil conformation. Residues 844–974 (TIFFSDVVGF…DTVNTASRME (131 aa)) enclose the Guanylate cyclase domain.

The protein belongs to the adenylyl cyclase class-4/guanylyl cyclase family. In terms of tissue distribution, expressed bilaterally in RIM interneurons.

It localises to the cell membrane. It carries out the reaction GTP = 3',5'-cyclic GMP + diphosphate. Its function is as follows. Guanylate cyclase involved in the production of the second messenger cGMP. The sequence is that of Receptor-type guanylate cyclase gcy-13 from Caenorhabditis elegans.